The following is a 397-amino-acid chain: Tryptophan synthase beta chain (397 aa).

At Lys86 the chain carries N6-(pyridoxal phosphate)lysine.

The protein belongs to the TrpB family. Tetramer of two alpha and two beta chains. It depends on pyridoxal 5'-phosphate as a cofactor.

It carries out the reaction (1S,2R)-1-C-(indol-3-yl)glycerol 3-phosphate + L-serine = D-glyceraldehyde 3-phosphate + L-tryptophan + H2O. It functions in the pathway amino-acid biosynthesis; L-tryptophan biosynthesis; L-tryptophan from chorismate: step 5/5. The beta subunit is responsible for the synthesis of L-tryptophan from indole and L-serine. This Edwardsiella ictaluri (strain 93-146) protein is Tryptophan synthase beta chain.